The chain runs to 192 residues: Pyridoxal 5'-phosphate synthase subunit PdxT (192 aa).

Residue 47–49 (GES) participates in L-glutamine binding. Cys-79 (nucleophile) is an active-site residue. Residues Arg-106 and 134–135 (IR) each bind L-glutamine. Residues His-170 and Glu-172 each act as charge relay system in the active site.

Belongs to the glutaminase PdxT/SNO family. In terms of assembly, in the presence of PdxS, forms a dodecamer of heterodimers. Only shows activity in the heterodimer.

The enzyme catalyses aldehydo-D-ribose 5-phosphate + D-glyceraldehyde 3-phosphate + L-glutamine = pyridoxal 5'-phosphate + L-glutamate + phosphate + 3 H2O + H(+). It carries out the reaction L-glutamine + H2O = L-glutamate + NH4(+). The protein operates within cofactor biosynthesis; pyridoxal 5'-phosphate biosynthesis. Functionally, catalyzes the hydrolysis of glutamine to glutamate and ammonia as part of the biosynthesis of pyridoxal 5'-phosphate. The resulting ammonia molecule is channeled to the active site of PdxS. The protein is Pyridoxal 5'-phosphate synthase subunit PdxT of Geobacillus sp. (strain WCH70).